A 21-amino-acid polypeptide reads, in one-letter code: Trypsin (21 aa).

The protein belongs to the peptidase S1 family.

The protein localises to the secreted. The protein resides in the extracellular space. It carries out the reaction Preferential cleavage: Arg-|-Xaa, Lys-|-Xaa.. The sequence is that of Trypsin from Apis mellifera scutellata (Africanized honey bee).